We begin with the raw amino-acid sequence, 100 residues long: Apolipoprotein C-II (100 aa).

The first 22 residues, 1-22 (MGSRFLLALFLVLLVLGYEVQG), serve as a signal peptide directing secretion. The lipid binding stretch occupies residues 66–74 (SVDEKLRDM). Residues 78–100 (SSAAVSTYAGIFTDQILTLLKGE) are lipoprotein lipase cofactor.

The protein belongs to the apolipoprotein C2 family. Post-translationally, proapolipoprotein C-II is synthesized as a sialic acid containing glycoprotein which is subsequently desialylated prior to its proteolytic processing. Proapolipoprotein C-II, the major form found in plasma undergoes proteolytic cleavage of its N-terminal hexapeptide to generate the mature form apolipoprotein C-II, which occurs as the minor form in plasma.

It localises to the secreted. In terms of biological role, component of chylomicrons, very low-density lipoproteins (VLDL), low-density lipoproteins (LDL), and high-density lipoproteins (HDL) in plasma. Plays an important role in lipoprotein metabolism as an activator of lipoprotein lipase. This chain is Apolipoprotein C-II (Apoc2), found in Neotoma lepida (Desert woodrat).